The primary structure comprises 162 residues: Catabolic 3-dehydroquinase (162 aa).

Residue Tyr-24 is the Proton acceptor of the active site. Substrate contacts are provided by Asn-88, His-94, and Asp-101. His-114 (proton donor) is an active-site residue. Substrate contacts are provided by residues 115–116 (VS) and Arg-125.

The protein belongs to the type-II 3-dehydroquinase family. In terms of assembly, homododecamer. Adopts a ring-like structure, composed of an arrangement of two hexameric rings stacked on top of one another.

The catalysed reaction is 3-dehydroquinate = 3-dehydroshikimate + H2O. It functions in the pathway aromatic compound metabolism; 3,4-dihydroxybenzoate biosynthesis; 3,4-dihydroxybenzoate from 3-dehydroquinate: step 1/2. In terms of biological role, is involved in the catabolism of quinate. Allows the utilization of quinate as carbon source via the beta-ketoadipate pathway. The chain is Catabolic 3-dehydroquinase from Podospora anserina (strain S / ATCC MYA-4624 / DSM 980 / FGSC 10383) (Pleurage anserina).